Reading from the N-terminus, the 156-residue chain is ATP synthase subunit b (156 aa).

Residues 7–27 (IFFQMLVFFVLGWFTMKFVWP) form a helical membrane-spanning segment.

This sequence belongs to the ATPase B chain family. As to quaternary structure, F-type ATPases have 2 components, F(1) - the catalytic core - and F(0) - the membrane proton channel. F(1) has five subunits: alpha(3), beta(3), gamma(1), delta(1), epsilon(1). F(0) has three main subunits: a(1), b(2) and c(10-14). The alpha and beta chains form an alternating ring which encloses part of the gamma chain. F(1) is attached to F(0) by a central stalk formed by the gamma and epsilon chains, while a peripheral stalk is formed by the delta and b chains.

The protein localises to the cell inner membrane. Its function is as follows. F(1)F(0) ATP synthase produces ATP from ADP in the presence of a proton or sodium gradient. F-type ATPases consist of two structural domains, F(1) containing the extramembraneous catalytic core and F(0) containing the membrane proton channel, linked together by a central stalk and a peripheral stalk. During catalysis, ATP synthesis in the catalytic domain of F(1) is coupled via a rotary mechanism of the central stalk subunits to proton translocation. Component of the F(0) channel, it forms part of the peripheral stalk, linking F(1) to F(0). The chain is ATP synthase subunit b from Bordetella pertussis (strain Tohama I / ATCC BAA-589 / NCTC 13251).